The primary structure comprises 521 residues: Bifunctional purine biosynthesis protein PurH (521 aa).

The 145-residue stretch at 1–145 folds into the MGS-like domain; sequence MIKQALISVS…KNHRDVTVVV (145 aa).

Belongs to the PurH family.

The enzyme catalyses (6R)-10-formyltetrahydrofolate + 5-amino-1-(5-phospho-beta-D-ribosyl)imidazole-4-carboxamide = 5-formamido-1-(5-phospho-D-ribosyl)imidazole-4-carboxamide + (6S)-5,6,7,8-tetrahydrofolate. The catalysed reaction is IMP + H2O = 5-formamido-1-(5-phospho-D-ribosyl)imidazole-4-carboxamide. It participates in purine metabolism; IMP biosynthesis via de novo pathway; 5-formamido-1-(5-phospho-D-ribosyl)imidazole-4-carboxamide from 5-amino-1-(5-phospho-D-ribosyl)imidazole-4-carboxamide (10-formyl THF route): step 1/1. It functions in the pathway purine metabolism; IMP biosynthesis via de novo pathway; IMP from 5-formamido-1-(5-phospho-D-ribosyl)imidazole-4-carboxamide: step 1/1. The sequence is that of Bifunctional purine biosynthesis protein PurH from Paraburkholderia phymatum (strain DSM 17167 / CIP 108236 / LMG 21445 / STM815) (Burkholderia phymatum).